Here is a 379-residue protein sequence, read N- to C-terminus: Succinate--CoA ligase [ADP-forming] subunit beta (379 aa).

Positions 9-237 (RDILARYGIP…SSDEPEAEQR (229 aa)) constitute an ATP-grasp domain. Residues Lys45, 52 to 54 (GRG), Ile94, and Glu99 each bind ATP. Residues Asn192 and Asp206 each contribute to the Mg(2+) site. Residues Asn257 and 314–316 (GIT) contribute to the substrate site.

This sequence belongs to the succinate/malate CoA ligase beta subunit family. Heterotetramer of two alpha and two beta subunits. Mg(2+) serves as cofactor.

The catalysed reaction is succinate + ATP + CoA = succinyl-CoA + ADP + phosphate. The enzyme catalyses GTP + succinate + CoA = succinyl-CoA + GDP + phosphate. The protein operates within carbohydrate metabolism; tricarboxylic acid cycle; succinate from succinyl-CoA (ligase route): step 1/1. Its function is as follows. Succinyl-CoA synthetase functions in the citric acid cycle (TCA), coupling the hydrolysis of succinyl-CoA to the synthesis of either ATP or GTP and thus represents the only step of substrate-level phosphorylation in the TCA. The beta subunit provides nucleotide specificity of the enzyme and binds the substrate succinate, while the binding sites for coenzyme A and phosphate are found in the alpha subunit. The chain is Succinate--CoA ligase [ADP-forming] subunit beta from Roseiflexus sp. (strain RS-1).